Reading from the N-terminus, the 513-residue chain is Na(+)/H(+) antiporter NhaB (513 aa).

11 helical membrane passes run 21–41 (LCII…SPFI), 43–63 (GWTL…CYPL), 88–108 (IIAN…IYFM), 137–157 (AAFL…ISVG), 202–222 (LLMH…VGEP), 235–255 (FIEF…CGIA), 299–318 (MAIQ…LHLA), 322–344 (IIGL…HAIG), 350–370 (PMPF…IVDL), 389–409 (LALF…VFVG), and 477–497 (MALP…EYLL).

Belongs to the NhaB Na(+)/H(+) (TC 2.A.34) antiporter family.

It localises to the cell inner membrane. It catalyses the reaction 2 Na(+)(in) + 3 H(+)(out) = 2 Na(+)(out) + 3 H(+)(in). Na(+)/H(+) antiporter that extrudes sodium in exchange for external protons. This Haemophilus ducreyi (strain 35000HP / ATCC 700724) protein is Na(+)/H(+) antiporter NhaB.